Here is a 196-residue protein sequence, read N- to C-terminus: Large ribosomal subunit protein bL25 (196 aa).

The protein belongs to the bacterial ribosomal protein bL25 family. CTC subfamily. Part of the 50S ribosomal subunit; part of the 5S rRNA/L5/L18/L25 subcomplex. Contacts the 5S rRNA. Binds to the 5S rRNA independently of L5 and L18.

In terms of biological role, this is one of the proteins that binds to the 5S RNA in the ribosome where it forms part of the central protuberance. The chain is Large ribosomal subunit protein bL25 from Amoebophilus asiaticus (strain 5a2).